Here is a 184-residue protein sequence, read N- to C-terminus: Guanylate kinase (184 aa).

The 179-residue stretch at 5 to 183 folds into the Guanylate kinase-like domain; sequence KKLIILTGPS…TAKRIIKLIQ (179 aa). An ATP-binding site is contributed by 12 to 19; it reads GPSGVGKG.

It belongs to the guanylate kinase family.

The protein localises to the cytoplasm. It catalyses the reaction GMP + ATP = GDP + ADP. Its function is as follows. Essential for recycling GMP and indirectly, cGMP. This chain is Guanylate kinase, found in Prochlorococcus marinus (strain MIT 9312).